Here is a 266-residue protein sequence, read N- to C-terminus: MDTFQVIILALIQGLTEFLPISSSAHLILPAQLLGWEDQGLSFDVAVNTGSLLAVVMYFRRELLSMFTAWTSSIVTGKQTQESKLSWWIILATIPAVIVGFSAKGFIETHFRSIEVIAATTIIFGLLLWWADKMQREGFNEFQVGWKKALVIGIAQAMALIPGTSRSGATITAALMLGLSREAAARFSFLMSVPVSLGAAILVTKDLLDSGQVIDYQALGLGIVVSFIAAYICIHYFLKIISKMGMTPFVVYRLALGAVLCGFIFL.

The next 8 helical transmembrane spans lie at 1 to 21, 39 to 59, 87 to 107, 111 to 131, 144 to 164, 183 to 203, 218 to 238, and 246 to 266; these read MDTFQVIILALIQGLTEFLPI, QGLSFDVAVNTGSLLAVVMYF, WWIILATIPAVIVGFSAKGFI, FRSIEVIAATTIIFGLLLWWA, VGWKKALVIGIAQAMALIPGT, AAARFSFLMSVPVSLGAAILV, ALGLGIVVSFIAAYICIHYFL, and MTPFVVYRLALGAVLCGFIFL.

This sequence belongs to the UppP family.

The protein localises to the cell inner membrane. It catalyses the reaction di-trans,octa-cis-undecaprenyl diphosphate + H2O = di-trans,octa-cis-undecaprenyl phosphate + phosphate + H(+). Catalyzes the dephosphorylation of undecaprenyl diphosphate (UPP). Confers resistance to bacitracin. This chain is Undecaprenyl-diphosphatase, found in Shewanella halifaxensis (strain HAW-EB4).